A 32-amino-acid chain; its full sequence is Cruzioseptin-9 (32 aa).

Glutamine 29 carries the glutamine amide modification. Residues 31–32 constitute a propeptide that is removed on maturation; that stretch reads EQ.

Expressed by the skin glands.

It is found in the secreted. In terms of biological role, has antimicrobial activity. The polypeptide is Cruzioseptin-9 (Cruziohyla calcarifer (Splendid leaf frog)).